A 213-amino-acid chain; its full sequence is Pyrrolidone-carboxylate peptidase (213 aa).

Residues E78, C141, and H165 contribute to the active site.

The protein belongs to the peptidase C15 family. In terms of assembly, homotetramer.

It localises to the cytoplasm. It catalyses the reaction Release of an N-terminal pyroglutamyl group from a polypeptide, the second amino acid generally not being Pro.. Functionally, removes 5-oxoproline from various penultimate amino acid residues except L-proline. The polypeptide is Pyrrolidone-carboxylate peptidase (Staphylococcus carnosus (strain TM300)).